The sequence spans 284 residues: D-tagatose-1,6-bisphosphate aldolase subunit GatY (284 aa).

D82 acts as the Proton donor in catalysis. H83 and H180 together coordinate Zn(2+). G181 is a dihydroxyacetone phosphate binding site. H208 provides a ligand contact to Zn(2+). Dihydroxyacetone phosphate contacts are provided by residues 209-211 (GAS) and 230-233 (NVAT).

It belongs to the class II fructose-bisphosphate aldolase family. TagBP aldolase GatY subfamily. Forms a complex with GatZ. It depends on Zn(2+) as a cofactor.

The enzyme catalyses D-tagatofuranose 1,6-bisphosphate = D-glyceraldehyde 3-phosphate + dihydroxyacetone phosphate. The protein operates within carbohydrate metabolism; D-tagatose 6-phosphate degradation; D-glyceraldehyde 3-phosphate and glycerone phosphate from D-tagatose 6-phosphate: step 2/2. Its function is as follows. Catalytic subunit of the tagatose-1,6-bisphosphate aldolase GatYZ, which catalyzes the reversible aldol condensation of dihydroxyacetone phosphate (DHAP or glycerone-phosphate) with glyceraldehyde 3-phosphate (G3P) to produce tagatose 1,6-bisphosphate (TBP). Requires GatZ subunit for full activity and stability. Is involved in the catabolism of galactitol. In Escherichia coli O139:H28 (strain E24377A / ETEC), this protein is D-tagatose-1,6-bisphosphate aldolase subunit GatY.